We begin with the raw amino-acid sequence, 235 residues long: MSNTPIELKGSSFTLSVVHLHEAEPEVIRQALEDKIAQAPAFLKHAPVVINVSGLESPVNWPELHKIVTSTGLRIIGVSGCKDASLKVEIDRMGLPLLTEGKEKAVRPAPVEPATPSEPPQNANPITKTRLIDVPVRSGQRIYAPQCDLIVTSHVSAGAELIADGNIHVYGMMRGRALAGASGDREAQIFCTHLTAELVSIAGVYWLSDKIPAEFYGKAARLRLADNALTVQPLN.

The disordered stretch occupies residues 104-125 (KAVRPAPVEPATPSEPPQNANP). Pro residues predominate over residues 110-119 (PVEPATPSEP).

Belongs to the MinC family. As to quaternary structure, interacts with MinD and FtsZ.

Cell division inhibitor that blocks the formation of polar Z ring septums. Rapidly oscillates between the poles of the cell to destabilize FtsZ filaments that have formed before they mature into polar Z rings. Prevents FtsZ polymerization. The sequence is that of Probable septum site-determining protein MinC from Salmonella agona (strain SL483).